Here is a 215-residue protein sequence, read N- to C-terminus: 3-demethoxyubiquinol 3-hydroxylase (215 aa).

Fe cation-binding residues include Glu-64, Glu-94, His-97, Glu-146, Glu-178, and His-181.

Belongs to the COQ7 family. Requires Fe cation as cofactor.

Its subcellular location is the cell membrane. The catalysed reaction is a 5-methoxy-2-methyl-3-(all-trans-polyprenyl)benzene-1,4-diol + AH2 + O2 = a 3-demethylubiquinol + A + H2O. It functions in the pathway cofactor biosynthesis; ubiquinone biosynthesis. Catalyzes the hydroxylation of 2-nonaprenyl-3-methyl-6-methoxy-1,4-benzoquinol during ubiquinone biosynthesis. The chain is 3-demethoxyubiquinol 3-hydroxylase from Coxiella burnetii (strain Dugway 5J108-111).